Consider the following 93-residue polypeptide: Small ribosomal subunit protein uS19 (93 aa).

This sequence belongs to the universal ribosomal protein uS19 family.

Protein S19 forms a complex with S13 that binds strongly to the 16S ribosomal RNA. This Pediococcus pentosaceus (strain ATCC 25745 / CCUG 21536 / LMG 10740 / 183-1w) protein is Small ribosomal subunit protein uS19.